We begin with the raw amino-acid sequence, 85 residues long: Large ribosomal subunit protein bL27 (85 aa).

Positions 1–22 are disordered; the sequence is MAHKKAGGSTNNGRDSESKRLG.

This sequence belongs to the bacterial ribosomal protein bL27 family.

This chain is Large ribosomal subunit protein bL27, found in Photobacterium profundum (strain SS9).